Reading from the N-terminus, the 254-residue chain is uncharacterized protein (254 aa).

8 consecutive transmembrane segments (helical) span residues 41–61, 64–84, 91–111, 125–145, 146–166, 172–192, 204–224, and 232–252; these read LFVFLFFLFATTISFTQIKII, ILQAPAVGIKFLQLAPGEYFF, IYCGIVATTPFAVYQVILYIL, LLISSVLLFITGGIFAYFVLA, PAALTFLISYGSDIVEPLWSF, FILLLLLSTGLAFEIPIIQLL, MIRAWRYIIIIATIAGAILTP, and LIMSSAVLLLYFGGIVILLVL.

This sequence belongs to the TatC family.

It is found in the plastid. The protein resides in the chloroplast membrane. This is an uncharacterized protein from Pyropia yezoensis (Susabi-nori).